A 480-amino-acid chain; its full sequence is UDP-glucose 6-dehydrogenase 3 (480 aa).

NAD(+) contacts are provided by residues 8–13, Asp-33, Arg-38, 86–90, 127–128, and Glu-161; these read GAGYVG, VNTPT, and ST. Substrate contacts are provided by residues 157–161, 216–223, and 256–269; these read EFLAE, KLAANAFL, and RIGP…VGFG. The active-site Nucleophile is Cys-272. 272-275 is an NAD(+) binding site; it reads CFQK. Residue 334 to 335 coordinates substrate; it reads FK. Arg-342 provides a ligand contact to NAD(+). Phosphoserine is present on Ser-393. Arg-447 is a binding site for substrate.

Belongs to the UDP-glucose/GDP-mannose dehydrogenase family.

The catalysed reaction is UDP-alpha-D-glucose + 2 NAD(+) + H2O = UDP-alpha-D-glucuronate + 2 NADH + 3 H(+). The protein operates within nucleotide-sugar biosynthesis; UDP-alpha-D-glucuronate biosynthesis; UDP-alpha-D-glucuronate from UDP-alpha-D-glucose: step 1/1. Its function is as follows. Involved in the biosynthesis of UDP-glucuronic acid (UDP-GlcA), providing nucleotide sugars for cell-wall polymers. This is UDP-glucose 6-dehydrogenase 3 (UGD3) from Oryza sativa subsp. japonica (Rice).